The sequence spans 371 residues: MATSAAFLKGDFKRTGKMELSDEQKSQMWINSVNSENKEALLAWVKETGIELVQINGQRKYGGPPPGWIGNAPVSGSEVFIGKIPQDIYEDKLIPLFQSVGKLYEFRLMMTFSGLNRGFAYARYISRRQAISAIMSLNGFEITKGCCIVVCRSTEKSELALDGLPGNFDENMLKNVLDEVTSGVSSISLHPSPTKESQVLAVVKYDSHRAAAMAKKTLCEGSPILPGLPLTVNWLKTDMRQKLRSTDKLQQTKDLSPLPLLYTDRPDLPKETLLSAVGCLNMLCQEMKLGRPVFLIKLFSVTSFGWIRFWYQVVIPTYPTPFCGYAWMIGENLELNEKYEHARQVVAMKILSALGYIPDFSLGDVTARNAL.

2 consecutive RRM domains span residues 85 to 163 and 165 to 245; these read PQDI…ALDG and PGNF…KLRS.

It is found in the nucleus. Its subcellular location is the cytoplasm. Its function is as follows. RNA-binding factor that positively regulates gene expression by prohibiting miRNA-mediated gene suppression. Relieves miRNA repression in germline cells. Prohibits the function of several miRNAs by blocking the accessibility of target mRNAs. Sequence-specific RNA-binding factor that binds to U-rich regions (URRs) in the 3'untranslated region (3'-UTR) of several mRNAs. Does not bind to miRNAs. May play a role during early embryonic survival. The chain is Dead end protein homolog 1 (dnd1) from Xenopus laevis (African clawed frog).